Here is a 309-residue protein sequence, read N- to C-terminus: MAASVRMYRAVGELGLASILSPARMAAPVLVMPVRTKKRYFIPPAVGAKQRTMDDMIKKARAAGVVTPQETMERPINIACTAGILDPYVPPEGDARLSSLSKEGLKQRTQQLKQTAASQLAIRKVKEYDSEFTTKTFPEKAQEIFITAHKYLTNFDRHKLHTLVTERCYPEMVRGNRYRTIRWSFVESIEAPRVVQVRCPEMVSKGNLYAQVTVRMHNKQTLIVYDRFGRVMCGSEEPRDVLEYVVFERHMVNPYGTWRMHGKIVPSWAPPKEPIVKTVLLPGQQLKPCQELDDISFEKAEPVPQQWYK.

It belongs to the mitochondrion-specific ribosomal protein mL45 family. In terms of assembly, component of the mitochondrial ribosome large subunit (39S) which comprises a 16S rRNA and about 50 distinct proteins.

The protein localises to the mitochondrion. Its function is as follows. Component of the mitochondrial large ribosomal subunit (mt-LSU). Within the mitochondrial ribosomes, required to direct the nascent polypeptide toward the tunnel exit and position the exit at a distance from the membrane surface. The protein is Large ribosomal subunit protein mL45 (mrpl45) of Xenopus laevis (African clawed frog).